A 388-amino-acid polypeptide reads, in one-letter code: Integrase (388 aa).

Residues 70-151 (YTVADAVNDW…CLNRAVKRAM (82 aa)) enclose the Core-binding (CB) domain. The 207-residue stretch at 173–379 (RPSKALTFAQ…VIQTGAVVMD (207 aa)) folds into the Tyr recombinase domain. Active-site residues include arginine 208, lysine 249, arginine 330, and histidine 353. Residue tyrosine 363 is the O-(3'-phospho-DNA)-tyrosine intermediate of the active site.

It belongs to the 'phage' integrase family.

Required for integration of pSAM2. The chain is Integrase (int) from Streptomyces ambofaciens.